A 501-amino-acid chain; its full sequence is Glycerol kinase (501 aa).

Thr17 is a binding site for ADP. ATP is bound by residues Thr17, Thr18, and Ser19. Thr17 is a binding site for sn-glycerol 3-phosphate. Residue Arg21 coordinates ADP. The sn-glycerol 3-phosphate site is built by Arg87, Glu88, Tyr139, and Asp243. Residues Arg87, Glu88, Tyr139, Asp243, and Gln244 each coordinate glycerol. Residues Thr265 and Gly308 each coordinate ADP. ATP-binding residues include Thr265, Gly308, Gln312, and Gly409. The ADP site is built by Gly409 and Asn413.

It belongs to the FGGY kinase family.

It catalyses the reaction glycerol + ATP = sn-glycerol 3-phosphate + ADP + H(+). Its pathway is polyol metabolism; glycerol degradation via glycerol kinase pathway; sn-glycerol 3-phosphate from glycerol: step 1/1. With respect to regulation, inhibited by fructose 1,6-bisphosphate (FBP). Its function is as follows. Key enzyme in the regulation of glycerol uptake and metabolism. Catalyzes the phosphorylation of glycerol to yield sn-glycerol 3-phosphate. This Pseudomonas savastanoi pv. phaseolicola (strain 1448A / Race 6) (Pseudomonas syringae pv. phaseolicola (strain 1448A / Race 6)) protein is Glycerol kinase.